The primary structure comprises 35 residues: MEALVYTFLLVSTLGIIFFAIFFREPPKVPTKKVK.

A helical transmembrane segment spans residues 3–23 (ALVYTFLLVSTLGIIFFAIFF).

This sequence belongs to the PsbT family. PSII is composed of 1 copy each of membrane proteins PsbA, PsbB, PsbC, PsbD, PsbE, PsbF, PsbH, PsbI, PsbJ, PsbK, PsbL, PsbM, PsbT, PsbY, PsbZ, Psb30/Ycf12, at least 3 peripheral proteins of the oxygen-evolving complex and a large number of cofactors. It forms dimeric complexes.

Its subcellular location is the plastid. It localises to the chloroplast thylakoid membrane. Functionally, found at the monomer-monomer interface of the photosystem II (PS II) dimer, plays a role in assembly and dimerization of PSII. PSII is a light-driven water plastoquinone oxidoreductase, using light energy to abstract electrons from H(2)O, generating a proton gradient subsequently used for ATP formation. This Nelumbo lutea (American lotus) protein is Photosystem II reaction center protein T.